The following is a 299-amino-acid chain: MPKYLTTLYKRTIKRNIILFKKLGKDFDEKKFILLLIIIAAIPLLISYYLHLTLKSMIIFVVIYVGAALFIPSILYENKIETLENNIPQALYIMILALESGRSINEALLEVVKSNIKEVSDIFRKVLYLMENQKLSFEESMTIVSNLYDSKVLRMLARIMIENRKYGGDLSDSLKILAKTLEDFKMYKRQLLSVTASGLAIGFIILCGVIPAVAALLGAYLIAVSGMLSGVAPIPPVKPEDISKGFEIVQMGTAIIGALFAIPIFGLKIGRMFLISAVTMTIGVLAYYTILKFAPGIFS.

The next 6 helical transmembrane spans lie at 32–52, 56–76, 199–219, 220–240, 246–266, and 273–293; these read FILLLIIIAAIPLLISYYLHL, SMIIFVVIYVGAALFIPSILY, LAIGFIILCGVIPAVAALLGA, YLIAVSGMLSGVAPIPPVKPE, FEIVQMGTAIIGALFAIPIFG, and FLISAVTMTIGVLAYYTILKF.

The protein resides in the cell membrane. This is an uncharacterized protein from Methanocaldococcus jannaschii (strain ATCC 43067 / DSM 2661 / JAL-1 / JCM 10045 / NBRC 100440) (Methanococcus jannaschii).